A 330-amino-acid chain; its full sequence is Olfactory receptor 5T9 (330 aa).

Over 1-37 the chain is Extracellular; sequence MSIHSPGYTVRRIPVNNVTDTTMFILTGFTDDADLQV. N-linked (GlcNAc...) asparagine glycosylation is present at Asn17. The chain crosses the membrane as a helical span at residues 38 to 58; the sequence is LLFLLFFVIYLFTLIGNLGLV. At 59-66 the chain is on the cytoplasmic side; sequence LLVIGDSR. Residues 67–87 traverse the membrane as a helical segment; it reads LHNPMYYFLSVLSFLDACYST. Over 88 to 111 the chain is Extracellular; sequence VVTPKMLVNFISNDKSISYPGCVT. Cys109 and Cys201 form a disulfide bridge. Residues 112-132 traverse the membrane as a helical segment; it reads EMFLFVTFGTTECFLLAAMAY. Residues 133–145 are Cytoplasmic-facing; the sequence is DRFVAIYNPLLYA. A helical transmembrane segment spans residues 146–166; sequence VKMSPRVYIPLIIACYSGGIM. Topologically, residues 167 to 208 are extracellular; it reads HATIHTVATFSLSFCASNEIRHVFCDIPPLLAISCSNTNINQ. The chain crosses the membrane as a helical span at residues 209–229; the sequence is LLLFYCVGSIEIITILIVLVS. Residues 230–249 lie on the Cytoplasmic side of the membrane; sequence YSFILFAILKMNSAEGRRKI. A helical membrane pass occupies residues 250-270; that stretch reads FSTCGSHLTGVSIYHGTILFM. Residues 271–283 lie on the Extracellular side of the membrane; that stretch reads YVRPSSNYALEHD. A helical transmembrane segment spans residues 284-304; that stretch reads MIVSTFYTIVIPMLNPIIYSL. The Cytoplasmic segment spans residues 305 to 330; sequence RNKDVKEAMKKIFERNFFMNKVHFKL.

This sequence belongs to the G-protein coupled receptor 1 family.

The protein resides in the cell membrane. In terms of biological role, potential odorant receptor. This Mus musculus (Mouse) protein is Olfactory receptor 5T9.